The primary structure comprises 2282 residues: Ectopic P granules protein 5 homolog (2282 aa).

This sequence belongs to the EPG5 family.

In terms of biological role, involved in autophagy. The protein is Ectopic P granules protein 5 homolog of Aedes aegypti (Yellowfever mosquito).